Here is a 374-residue protein sequence, read N- to C-terminus: Probable quinol oxidase subunit 2 (374 aa).

Residues 1–19 (MSKFKSLLLLFGTLILLSG) form the signal peptide. Cys20 carries the N-palmitoyl cysteine lipid modification. Cys20 carries the S-diacylglycerol cysteine lipid modification. 2 helical membrane-spanning segments follow: residues 43–63 (SIIF…IFIF) and 82–102 (IETI…IPTV). Residues 317-374 (ERHGMKPMILGNNEKYDNEFKKEEDHNSKEMEKISKGAKDENASKLHKKEHDDHGGGH) form a disordered region. A compositionally biased stretch (basic and acidic residues) spans 330–374 (EKYDNEFKKEEDHNSKEMEKISKGAKDENASKLHKKEHDDHGGGH).

This sequence belongs to the cytochrome c oxidase subunit 2 family.

It is found in the cell membrane. It catalyses the reaction 2 a quinol + O2 = 2 a quinone + 2 H2O. In terms of biological role, catalyzes quinol oxidation with the concomitant reduction of oxygen to water. Subunit II transfers the electrons from a quinol to the binuclear center of the catalytic subunit I. This Staphylococcus epidermidis (strain ATCC 12228 / FDA PCI 1200) protein is Probable quinol oxidase subunit 2 (qoxA).